The sequence spans 432 residues: Adenylosuccinate synthetase (432 aa).

GTP contacts are provided by residues 16-22 (GDEGKGK) and 44-46 (GHM). Asp17 serves as the catalytic Proton acceptor. Mg(2+) contacts are provided by Asp17 and Gly44. IMP is bound by residues 17-20 (DEGK), 42-45 (NAGH), Thr132, Arg146, Gln226, Thr241, and Arg305. The Proton donor role is filled by His45. 301–307 (LNTGRPR) contributes to the substrate binding site. Residues Arg307, 333–335 (LFD), and 415–417 (SVG) contribute to the GTP site.

The protein belongs to the adenylosuccinate synthetase family. Homodimer. The cofactor is Mg(2+).

It localises to the cytoplasm. The enzyme catalyses IMP + L-aspartate + GTP = N(6)-(1,2-dicarboxyethyl)-AMP + GDP + phosphate + 2 H(+). Its pathway is purine metabolism; AMP biosynthesis via de novo pathway; AMP from IMP: step 1/2. In terms of biological role, plays an important role in the de novo pathway of purine nucleotide biosynthesis. Catalyzes the first committed step in the biosynthesis of AMP from IMP. The chain is Adenylosuccinate synthetase from Mycoplasma mycoides subsp. mycoides SC (strain CCUG 32753 / NCTC 10114 / PG1).